Reading from the N-terminus, the 508-residue chain is Light-independent protochlorophyllide reductase subunit B (508 aa).

D36 serves as a coordination point for [4Fe-4S] cluster. D282 serves as the catalytic Proton donor. Position 417–418 (417–418 (GL)) interacts with substrate.

It belongs to the ChlB/BchB/BchZ family. Protochlorophyllide reductase is composed of three subunits; BchL, BchN and BchB. Forms a heterotetramer of two BchB and two BchN subunits. [4Fe-4S] cluster is required as a cofactor.

It catalyses the reaction chlorophyllide a + oxidized 2[4Fe-4S]-[ferredoxin] + 2 ADP + 2 phosphate = protochlorophyllide a + reduced 2[4Fe-4S]-[ferredoxin] + 2 ATP + 2 H2O. It participates in porphyrin-containing compound metabolism; bacteriochlorophyll biosynthesis (light-independent). Component of the dark-operative protochlorophyllide reductase (DPOR) that uses Mg-ATP and reduced ferredoxin to reduce ring D of protochlorophyllide (Pchlide) to form chlorophyllide a (Chlide). This reaction is light-independent. The NB-protein (BchN-BchB) is the catalytic component of the complex. This is Light-independent protochlorophyllide reductase subunit B from Methylocella silvestris (strain DSM 15510 / CIP 108128 / LMG 27833 / NCIMB 13906 / BL2).